The chain runs to 671 residues: DNA ligase (671 aa).

Residues 36–40 (DAEYD), 85–86 (SL), and Glu-116 each bind NAD(+). Lys-118 (N6-AMP-lysine intermediate) is an active-site residue. NAD(+) is bound by residues Arg-139, Glu-176, Lys-292, and Lys-316. Residues Cys-410, Cys-413, Cys-428, and Cys-434 each coordinate Zn(2+). Residues 591-671 (QKGGRFQGMT…QFLAMFSEKE (81 aa)) enclose the BRCT domain.

The protein belongs to the NAD-dependent DNA ligase family. LigA subfamily. Mg(2+) serves as cofactor. Requires Mn(2+) as cofactor.

It catalyses the reaction NAD(+) + (deoxyribonucleotide)n-3'-hydroxyl + 5'-phospho-(deoxyribonucleotide)m = (deoxyribonucleotide)n+m + AMP + beta-nicotinamide D-nucleotide.. DNA ligase that catalyzes the formation of phosphodiester linkages between 5'-phosphoryl and 3'-hydroxyl groups in double-stranded DNA using NAD as a coenzyme and as the energy source for the reaction. It is essential for DNA replication and repair of damaged DNA. The protein is DNA ligase of Acidithiobacillus ferrooxidans (strain ATCC 23270 / DSM 14882 / CIP 104768 / NCIMB 8455) (Ferrobacillus ferrooxidans (strain ATCC 23270)).